Consider the following 346-residue polypeptide: Elongation factor Ts (346 aa).

The interval 80-83 (TDFV) is involved in Mg(2+) ion dislocation from EF-Tu.

Belongs to the EF-Ts family.

It localises to the cytoplasm. In terms of biological role, associates with the EF-Tu.GDP complex and induces the exchange of GDP to GTP. It remains bound to the aminoacyl-tRNA.EF-Tu.GTP complex up to the GTP hydrolysis stage on the ribosome. The sequence is that of Elongation factor Ts from Streptococcus thermophilus (strain CNRZ 1066).